A 1315-amino-acid chain; its full sequence is ESX secretion system protein EccC (1315 aa).

A compositionally biased stretch (basic residues) spans 1-11 (MSTVLVRRKER). The disordered stretch occupies residues 1–21 (MSTVLVRRKERRQPPQMPRGE). Over 1-40 (MSTVLVRRKERRQPPQMPRGEILLESPPELPEVVTNSFQN) the chain is Cytoplasmic. A helical transmembrane segment spans residues 41-61 (VLMYLPMAAGSAAMVFTFLNH). Topologically, residues 62-64 (RNT) are extracellular. A helical membrane pass occupies residues 65–85 (LQLVAGGMFALSMFGMMFGQL). The Cytoplasmic segment spans residues 86-1315 (SQQSGERKTK…RLIQTAYRES (1230 aa)). FtsK domains are found at residues 456-656 (GRPL…MESR) and 813-1004 (RDPY…YESE). An ATP-binding site is contributed by 479 to 486 (GATGSGKS). Glu593 is a catalytic residue. The tract at residues 721-1315 (RPQVVEQPQP…RLIQTAYRES (595 aa)) is binds EsxB. ATP is bound by residues 834-839 (QTGKST), Thr1031, 1119-1124 (ECGKSN), Gln1293, and 1310-1311 (TA). The FtsK 3 domain maps to 1099-1282 (LSPVYLDFNT…MSGNKDEGIL (184 aa)).

In terms of assembly, the cytosolic domain can form homodimers. Binds EsxB, which leads to multimerization, however EsxA disassembles the multimers, possibly by making EccC-EsxA-EsxB trimers instead of EccC-EsxB-EsxB-EccC tetramers. Forms a complex with EsxA and EsxB, probably wholly mediated by EsxB.

The protein localises to the cell membrane. Its activity is regulated as follows. EsxB binding to the third FtsK domain causes multimerization; a subsequent unknown step relieves the allosteric inhibition of linker 2 on FtsK domain 1, activating the ATPase activity; a mutant EsxB ('Ala-98') does not cause multimers to form. Its function is as follows. Part of the ESX specialized secretion system, which exports proteins from the cell including EsxA (ESAT-6) and EsxB (CFP-10). Has weak intrinsic ATPase activity; probably only the first FtsK domain can hydrolyze ATP. Might be the translocase subunit. The chain is ESX secretion system protein EccC from Thermomonospora curvata (strain ATCC 19995 / DSM 43183 / JCM 3096 / KCTC 9072 / NBRC 15933 / NCIMB 10081 / Henssen B9).